Consider the following 397-residue polypeptide: uncharacterized protein (397 aa).

The segment at 368–391 (TTKPGLHQPTQKRPTQTTSKPYIN) is disordered. Over residues 375–388 (QPTQKRPTQTTSKP) the composition is skewed to polar residues.

This is an uncharacterized protein from Acanthamoeba polyphaga mimivirus (APMV).